We begin with the raw amino-acid sequence, 257 residues long: Putative B3 domain-containing protein At2g27410 (257 aa).

The segment at 5-50 (ARTTKINHFRGTSTTQNPNRGLEPSPSSYVTRRSKEKRPINVEKRS) is disordered. Residues 8-35 (TKINHFRGTSTTQNPNRGLEPSPSSYVT) show a composition bias toward polar residues. Positions 115–209 (TPDFLTEDET…KLCFALTPKN (95 aa)) form a DNA-binding region, TF-B3. The interval 212 to 257 (RGNSLPGGDGASTSGESGQVPLPIPPARYSSNSGQGCSGESSSSSS) is disordered. The span at 241–257 (SSNSGQGCSGESSSSSS) shows a compositional bias: low complexity.

It is found in the nucleus. This Arabidopsis thaliana (Mouse-ear cress) protein is Putative B3 domain-containing protein At2g27410.